The following is a 99-amino-acid chain: MICOS complex subunit MIC10 (99 aa).

Helical transmembrane passes span 27–43 (RFVY…LLFF) and 50–66 (WASI…SAYT).

The protein belongs to the MICOS complex subunit Mic10 family. As to quaternary structure, component of the mitochondrial contact site and cristae organizing system (MICOS) complex. The MICOS complex associates with mitochondrial outer membrane proteins. Present in a large lipid-enriched complex called mitochondrial transmembrane lipoprotein (MTL) complex made of proteins located in the two mitochondrial membranes, including the TOM complex and the core components of the MICOS complex and containing at least digalactosyldiacylglycerol (DGDG).

It is found in the mitochondrion inner membrane. Its function is as follows. Component of the MICOS complex, a large protein complex of the mitochondrial inner membrane that plays crucial roles in the maintenance of crista junctions, inner membrane architecture, and formation of contact sites to the outer membrane. This chain is MICOS complex subunit MIC10, found in Arabidopsis thaliana (Mouse-ear cress).